Reading from the N-terminus, the 271-residue chain is Chymotrypsin BII (271 aa).

Residues 1 to 15 (MIGKLSLLLVCVAVA) form the signal peptide. A propeptide spans 16–45 (SGNPAAGKPWHWKSPKPLVDPRIHVNATPR) (activation peptide). Residues 46 to 268 (IVGGVEATPH…YLDWIEQKTG (223 aa)) form the Peptidase S1 domain. A disulfide bridge links cysteine 71 with cysteine 87. Active-site charge relay system residues include histidine 86 and aspartate 132. 2 cysteine pairs are disulfide-bonded: cysteine 196/cysteine 209 and cysteine 219/cysteine 245. Residue serine 223 is the Charge relay system of the active site.

It belongs to the peptidase S1 family.

The protein resides in the secreted. It is found in the extracellular space. It carries out the reaction Preferential cleavage: Tyr-|-Xaa, Trp-|-Xaa, Phe-|-Xaa, Leu-|-Xaa.. In terms of biological role, serine protease with chymotryptic and collagenolytic activities. The chain is Chymotrypsin BII from Penaeus vannamei (Whiteleg shrimp).